Here is a 124-residue protein sequence, read N- to C-terminus: Large ribosomal subunit protein bL12 (124 aa).

The protein belongs to the bacterial ribosomal protein bL12 family. Homodimer. Part of the ribosomal stalk of the 50S ribosomal subunit. Forms a multimeric L10(L12)X complex, where L10 forms an elongated spine to which 2 to 4 L12 dimers bind in a sequential fashion. Binds GTP-bound translation factors.

In terms of biological role, forms part of the ribosomal stalk which helps the ribosome interact with GTP-bound translation factors. Is thus essential for accurate translation. The chain is Large ribosomal subunit protein bL12 from Akkermansia muciniphila (strain ATCC BAA-835 / DSM 22959 / JCM 33894 / BCRC 81048 / CCUG 64013 / CIP 107961 / Muc).